The following is a 424-amino-acid chain: Tol-Pal system protein TolB (424 aa).

The first 16 residues, 1–16 (MKQLLVLILSLYTTLA), serve as a signal peptide directing secretion.

Belongs to the TolB family. As to quaternary structure, the Tol-Pal system is composed of five core proteins: the inner membrane proteins TolA, TolQ and TolR, the periplasmic protein TolB and the outer membrane protein Pal. They form a network linking the inner and outer membranes and the peptidoglycan layer.

It localises to the periplasm. Functionally, part of the Tol-Pal system, which plays a role in outer membrane invagination during cell division and is important for maintaining outer membrane integrity. The sequence is that of Tol-Pal system protein TolB from Ruthia magnifica subsp. Calyptogena magnifica.